Reading from the N-terminus, the 610-residue chain is Chitinase 63 (610 aa).

An N-terminal signal peptide occupies residues 1 to 30 (MRFRHKAAALAATLALPLAGLVGLASPAQA). The CBM2 domain maps to 31-134 (ATSATATFQK…KINGGSCDGS (104 aa)). Disordered regions lie at residues 125–153 (KING…ASNI) and 208–239 (ARDT…PNPG). The Fibronectin type-III domain occupies 144–229 (APGTPTASNI…GSVKVTTTGG (86 aa)). Residues 213-224 (DQTGPASGSVKV) are compositionally biased toward polar residues. The region spanning 241 to 610 (EVKMGYFTNW…LVSAIDSGLK (370 aa)) is the GH18 domain. Chitin contacts are provided by residues 313–314 (DQ) and 340–343 (GGWT). The active-site Proton donor is Glu383. Chitin is bound by residues Tyr384, 450 to 453 (MTYD), and Trp590.

It belongs to the glycosyl hydrolase 18 family. Chitinase class II subfamily.

It carries out the reaction Random endo-hydrolysis of N-acetyl-beta-D-glucosaminide (1-&gt;4)-beta-linkages in chitin and chitodextrins.. This Streptomyces plicatus protein is Chitinase 63 (chtA).